Here is a 272-residue protein sequence, read N- to C-terminus: Formamidopyrimidine-DNA glycosylase (272 aa).

The Schiff-base intermediate with DNA role is filled by proline 2. The active-site Proton donor is the glutamate 3. Lysine 58 serves as the catalytic Proton donor; for beta-elimination activity. Histidine 92, arginine 111, and arginine 153 together coordinate DNA. The segment at 238–272 (AVYGRQGQSCPRCGGLVERCRLGQRSTFFCPACQR) adopts an FPG-type zinc-finger fold. Arginine 262 functions as the Proton donor; for delta-elimination activity in the catalytic mechanism.

This sequence belongs to the FPG family. In terms of assembly, monomer. Requires Zn(2+) as cofactor.

The catalysed reaction is Hydrolysis of DNA containing ring-opened 7-methylguanine residues, releasing 2,6-diamino-4-hydroxy-5-(N-methyl)formamidopyrimidine.. It carries out the reaction 2'-deoxyribonucleotide-(2'-deoxyribose 5'-phosphate)-2'-deoxyribonucleotide-DNA = a 3'-end 2'-deoxyribonucleotide-(2,3-dehydro-2,3-deoxyribose 5'-phosphate)-DNA + a 5'-end 5'-phospho-2'-deoxyribonucleoside-DNA + H(+). Its function is as follows. Involved in base excision repair of DNA damaged by oxidation or by mutagenic agents. Acts as a DNA glycosylase that recognizes and removes damaged bases. Has a preference for oxidized purines, such as 7,8-dihydro-8-oxoguanine (8-oxoG). Has AP (apurinic/apyrimidinic) lyase activity and introduces nicks in the DNA strand. Cleaves the DNA backbone by beta-delta elimination to generate a single-strand break at the site of the removed base with both 3'- and 5'-phosphates. The protein is Formamidopyrimidine-DNA glycosylase of Laribacter hongkongensis (strain HLHK9).